The following is a 746-amino-acid chain: MGQTGKKSEKGPVCWRKRVKSEYMRLRQLKRFRRADEVKSMFSSNRQKILERTEILNQEWKQRRIQPVHILTSVSSLRGTRECSVTSDLDFPTQVIPLKTLNAVASVPIMYSWSPLQQNFMVEDETVLHNIPYMGDEVLDQDGTFIEELIKNYDGKVHGDRECGFINDEIFVELVNALGQYNDDDDDDDGDDPEEREEKQKDLEDHRDDKESRPPRKFPSDKIFEAISSMFPDKGTAEELKEKYKELTEQQLPGALPPECTPNIDGPNAKSVQREQSLHSFHTLFCRRCFKYDCFLHPFHATPNAYKRKNTETALDNKPCGPQCYQHLEGAKEFAAALTAERIKTPPKRPGGRRRGRLPNNSSRPSTPTINVLESKDTDSDREAGTETGGENNDKEEEEKKDETSSSSEANSRCQTPIKMKPNIEPPENVEWSGAEASMFRVLIGTYYDNFCAIARLIGTKTCRQVYEFRVKESSIIAPAPAEDVDTPPRKKKRKHRLWAAHCRKIQLKKDGSSNHVYNYQPCDHPRQPCDSSCPCVIAQNFCEKFCQCSSECQNRFPGCRCKAQCNTKQCPCYLAVRECDPDLCLTCGAADHWDSKNVSCKNCSIQRGSKKHLLLAPSDVAGWGIFIKDPVQKNEFISEYCGEIISQDEADRRGKVYDKYMCSFLFNLNNDFVVDATRKGNKIRFANHSVNPNCYAKVMMVNGDHRIGIFAKRAIQTGEELFFDYRYSQADALKYVGIEREMEIP.

An interaction with DNMT1, DNMT3A and DNMT3B region spans residues 1 to 340 (MGQTGKKSEK…AKEFAAALTA (340 aa)). Serine 21 carries the phosphoserine; by PKB/AKT1 modification. The interaction with EED stretch occupies residues 39-68 (KSMFSSNRQKILERTEILNQEWKQRRIQPV). O-linked (GlcNAc) serine glycosylation is present at serine 75. Serine 76 is subject to Phosphoserine. A disordered region spans residues 180-222 (QYNDDDDDDDGDDPEEREEKQKDLEDHRDDKESRPPRKFPSDK). A compositionally biased stretch (acidic residues) spans 182-195 (NDDDDDDDGDDPEE). Residues 196–222 (REEKQKDLEDHRDDKESRPPRKFPSDK) show a composition bias toward basic and acidic residues. Positions 329–522 (EGAKEFAAAL…SSNHVYNYQP (194 aa)) are interaction with CDYL. Threonine 339 carries the post-translational modification Phosphothreonine. The tract at residues 340-426 (AERIKTPPKR…PIKMKPNIEP (87 aa)) is disordered. Phosphothreonine; by CDK1 and CDK2 is present on threonine 345. Positions 345–357 (TPPKRPGGRRRGR) are enriched in basic residues. 2 positions are modified to phosphoserine: serine 363 and serine 366. A Phosphothreonine modification is found at threonine 367. Residues 374 to 385 (ESKDTDSDREAG) are compositionally biased toward basic and acidic residues. Threonine 487 is subject to Phosphothreonine. The CXC domain maps to 503–605 (CRKIQLKKDG…SKNVSCKNCS (103 aa)). The 116-residue stretch at 612–727 (KHLLLAPSDV…TGEELFFDYR (116 aa)) folds into the SET domain. Residue lysine 634 forms a Glycyl lysine isopeptide (Lys-Gly) (interchain with G-Cter in SUMO2) linkage.

The protein belongs to the class V-like SAM-binding methyltransferase superfamily. Histone-lysine methyltransferase family. EZ subfamily. As to quaternary structure, component of the PRC2/EED-EZH2 complex, which includes EED, EZH2, SUZ12, RBBP4 and RBBP7 and possibly AEBP2. The minimum components required for methyltransferase activity of the PRC2/EED-EZH2 complex are EED, EZH2 and SUZ12. The PRC2 complex may also interact with DNMT1, DNMT3A, DNMT3B and PHF1 via the EZH2 subunit and with SIRT1 via the SUZ12 subunit. Interacts with HDAC1 and HDAC2. Binds ATRX via the SET domain. Interacts with PRAME. Interacts with CDYL. Interacts with BMAL1, CLOCK and CRY1. Interacts with DNMT3L; the interaction is direct. Interacts with EZHIP; the interaction blocks EZH2 methyltransferase activity. Interacts with ZNF263; recruited to the SIX3 promoter along with other proteins involved in chromatin modification and transcriptional corepression where it contributes to transcriptional repression. Interacts with ARMC12. Interacts with ZMYND8; the interaction is dependent on the presence of chromatin. Interacts with DDX18; this interaction inhibits the PRC2 complex. Post-translationally, phosphorylated by AKT1. Phosphorylation by AKT1 reduces methyltransferase activity. Phosphorylation at Thr-345 by CDK1 and CDK2 promotes maintenance of H3K27me3 levels at EZH2-target loci, thus leading to epigenetic gene silencing. Sumoylated. In terms of processing, glycosylated: O-GlcNAcylation at Ser-75 by OGT increases stability of EZH2 and facilitates the formation of H3K27me3 by the PRC2/EED-EZH2 complex.

It is found in the nucleus. It catalyses the reaction L-lysyl(27)-[histone H3] + 3 S-adenosyl-L-methionine = N(6),N(6),N(6)-trimethyl-L-lysyl(27)-[histone H3] + 3 S-adenosyl-L-homocysteine + 3 H(+). Polycomb group (PcG) protein. Catalytic subunit of the PRC2/EED-EZH2 complex, which methylates 'Lys-9' (H3K9me) and 'Lys-27' (H3K27me) of histone H3, leading to transcriptional repression of the affected target gene. Able to mono-, di- and trimethylate 'Lys-27' of histone H3 to form H3K27me1, H3K27me2 and H3K27me3, respectively. Displays a preference for substrates with less methylation, loses activity when progressively more methyl groups are incorporated into H3K27, H3K27me0 &gt; H3K27me1 &gt; H3K27me2. Compared to EZH1-containing complexes, it is more abundant in embryonic stem cells and plays a major role in forming H3K27me3, which is required for embryonic stem cell identity and proper differentiation. The PRC2/EED-EZH2 complex may also serve as a recruiting platform for DNA methyltransferases, thereby linking two epigenetic repression systems. EZH2 can also methylate non-histone proteins such as the transcription factor GATA4 and the nuclear receptor RORA. Regulates the circadian clock via histone methylation at the promoter of the circadian genes. Essential for the CRY1/2-mediated repression of the CLOCK-BMAL1 transcriptional activation of PER1/2. Involved in the di and trimethylation of 'Lys-27' of histone H3 on PER1/2 promoters which is necessary for the CRY1/2 proteins to inhibit transcription. This Macaca fascicularis (Crab-eating macaque) protein is Histone-lysine N-methyltransferase EZH2 (EZH2).